Consider the following 451-residue polypeptide: MRECISIHIGQAGIQVGNACWELYCLEHGIQPDGQMPGDKTVGGGDDAFNTFFSETGAGKHVPRAVFVDLEPTVIDEVRTGTYRQLFHPEQLISGKEDAANNFARGHYTIGKEIVDLCLDRIRKLADNCTGLQGFLVFNAVGGGTGSGLGSLLLERLSVDYGKKSKLGFTVYPSPQVSTSVVEPYNSVLSTHSLLEHTDVAVLLDNEAIYDICRRSLDIERPTYTNLNRLVSQVISSLTASLRFDGALNVDVNEFQTNLVPYPRIHFMLSSYAPVISAEKAYHEQLSVAEITNSAFEPSSMMAKCDPRHGKYMACCLMYRGDVVPKDVNAAVATIKTKRTIQFVDWCPTGFKCGINYQPPSVVPGGDLAKVQRAVCMISNSTSVVEVFSRIDHKFDLMYAKRAFVHWYVGEGMEEGEFSEAREDLAALEKDYEEVGAEFDEGEDGDEGDEY.

Glutamine 11 is a binding site for GTP. Lysine 40 carries the N6-acetyllysine modification. 6 residues coordinate GTP: glutamate 71, glycine 144, threonine 145, threonine 179, asparagine 206, and asparagine 228. Glutamate 71 provides a ligand contact to Mg(2+). Glutamate 254 is an active-site residue.

It belongs to the tubulin family. As to quaternary structure, dimer of alpha and beta chains. A typical microtubule is a hollow water-filled tube with an outer diameter of 25 nm and an inner diameter of 15 nM. Alpha-beta heterodimers associate head-to-tail to form protofilaments running lengthwise along the microtubule wall with the beta-tubulin subunit facing the microtubule plus end conferring a structural polarity. Microtubules usually have 13 protofilaments but different protofilament numbers can be found in some organisms and specialized cells. Mg(2+) is required as a cofactor. Post-translationally, undergoes a tyrosination/detyrosination cycle, the cyclic removal and re-addition of a C-terminal tyrosine residue by the enzymes tubulin tyrosine carboxypeptidase (TTCP) and tubulin tyrosine ligase (TTL), respectively. In terms of processing, acetylation of alpha chains at Lys-40 stabilizes microtubules and affects affinity and processivity of microtubule motors. This modification has a role in multiple cellular functions, ranging from cell motility, cell cycle progression or cell differentiation to intracellular trafficking and signaling.

The protein localises to the cytoplasm. Its subcellular location is the cytoskeleton. It catalyses the reaction GTP + H2O = GDP + phosphate + H(+). Tubulin is the major constituent of microtubules, a cylinder consisting of laterally associated linear protofilaments composed of alpha- and beta-tubulin heterodimers. Microtubules grow by the addition of GTP-tubulin dimers to the microtubule end, where a stabilizing cap forms. Below the cap, tubulin dimers are in GDP-bound state, owing to GTPase activity of alpha-tubulin. The polypeptide is Tubulin alpha-3 chain (TUBA3) (Hordeum vulgare (Barley)).